A 1235-amino-acid chain; its full sequence is Serine/threonine-protein kinase TAO2 (1235 aa).

A Phosphoserine modification is found at Ser9. The Protein kinase domain maps to 28 to 281 (FSDLREIGHG…SEVLLKHRFV (254 aa)). ATP contacts are provided by residues 34–42 (IGHGSFGAV) and Lys57. Residue Asp151 is the Proton acceptor of the active site. Ser181 carries the phosphoserine modification. Positions 318 to 457 (QEAPNGPGAE…TSTTSSARRR (140 aa)) are disordered. Positions 350 to 374 (SSHSVPSMSISASSQSSSVNSLADA) are enriched in low complexity. Residues 375-393 (SDNEEEEEEEEEEEEEEEG) show a composition bias toward acidic residues. A compositionally biased stretch (basic and acidic residues) spans 394-409 (PEAREMAMMQEGEHTV). Residue Ser414 is modified to Phosphoserine. Coiled coils occupy residues 486–547 (SALR…RRHQ) and 574–601 (KELA…LQEN). Ser656 is modified (phosphoserine). Residues 681 to 713 (LRQHEATRELELRQLQAVQRTRAELTRLQHQTE) adopt a coiled-coil conformation. Disordered stretches follow at residues 732–777 (HAAQ…QPCS), 804–835 (KEGA…GSLV), and 891–939 (QGPA…RPCP). The span at 766–777 (NTGTPIEQQPCS) shows a compositional bias: polar residues. Phosphoserine is present on residues Ser777, Ser825, and Ser827. A compositionally biased stretch (acidic residues) spans 899–908 (PEEEEEEEEG). Residues 924-934 (PDIPPEPPPTH) show a composition bias toward pro residues. The next 2 membrane-spanning stretches (helical) occupy residues 965–985 (LLPL…GGGL) and 987–1007 (AALL…LLLC). 2 positions are modified to phosphoserine: His1011 and Gly1031. 3 helical membrane-spanning segments follow: residues 1012–1032 (LPSS…VLGL), 1043–1063 (LGLG…LVAM), and 1166–1186 (QGLA…WGLL). The interval 1198–1235 (LPRSQRQLGPPASRQPLPGTLAGRRSRTRQSRALPPWR) is disordered.

It belongs to the protein kinase superfamily. STE Ser/Thr protein kinase family. STE20 subfamily. Interacts with MAP2K3 and MAP2K6. Self-associates. Interacts with tubulins through the C-terminal domain. Interacts with MAP3K7 and interferes with MAP3K7-binding to CHUK and thus prevents NF-kappa-B activation. Isoform 2 interacts with PCDH8; this complex may also include CDH2. Mg(2+) is required as a cofactor. Post-translationally, isoforms 1 and 2 are autophosphorylated. In terms of processing, C-terminal cleavage of isoform 1 and subsequent nuclear localization requires CASP9 activity. Autophosphorylated. Phosphorylated by ATM. Post-translationally, phosphorylated on Ser-1031 by MAPK14. This phosphorylation is required PCDH8 for endocytosis. In terms of tissue distribution, ubiquitously expressed, with a higher level of expression in testis and brain.

Its subcellular location is the cytoplasmic vesicle membrane. It is found in the cytoplasm. It localises to the cytoskeleton. The protein resides in the nucleus. The protein localises to the cell projection. Its subcellular location is the dendrite. The catalysed reaction is L-seryl-[protein] + ATP = O-phospho-L-seryl-[protein] + ADP + H(+). The enzyme catalyses L-threonyl-[protein] + ATP = O-phospho-L-threonyl-[protein] + ADP + H(+). With respect to regulation, selectively inhibited by the enantiopure organoruthenium inhibitor 9E1. Activated following arsenic trioxide (As(2)O(3)) treatment. In terms of biological role, serine/threonine-protein kinase involved in different processes such as membrane blebbing and apoptotic bodies formation DNA damage response and MAPK14/p38 MAPK stress-activated MAPK cascade. Phosphorylates itself, MBP, activated MAPK8, MAP2K3, MAP2K6 and tubulins. Activates the MAPK14/p38 MAPK signaling pathway through the specific activation and phosphorylation of the upstream MAP2K3 and MAP2K6 kinases. In response to DNA damage, involved in the G2/M transition DNA damage checkpoint by activating the p38/MAPK14 stress-activated MAPK cascade, probably by mediating phosphorylation of upstream MAP2K3 and MAP2K6 kinases. Isoform 1, but not isoform 2, plays a role in apoptotic morphological changes, including cell contraction, membrane blebbing and apoptotic bodies formation. This function, which requires the activation of MAPK8/JNK and nuclear localization of C-terminally truncated isoform 1, may be linked to the mitochondrial CASP9-associated death pathway. Isoform 1 binds to microtubules and affects their organization and stability independently of its kinase activity. Prevents MAP3K7-mediated activation of CHUK, and thus NF-kappa-B activation, but not that of MAPK8/JNK. May play a role in the osmotic stress-MAPK8 pathway. Isoform 2, but not isoform 1, is required for PCDH8 endocytosis. Following homophilic interactions between PCDH8 extracellular domains, isoform 2 phosphorylates and activates MAPK14/p38 MAPK which in turn phosphorylates isoform 2. This process leads to PCDH8 endocytosis and CDH2 cointernalization. Both isoforms are involved in MAPK14 phosphorylation. The sequence is that of Serine/threonine-protein kinase TAO2 (TAOK2) from Homo sapiens (Human).